The sequence spans 60 residues: Stress response protein YkoL (60 aa).

The polypeptide is Stress response protein YkoL (ykoL) (Bacillus subtilis (strain 168)).